Reading from the N-terminus, the 174-residue chain is Alkyl hydroperoxide reductase AhpD (174 aa).

The Proton donor role is filled by Cys-130. Cys-130 and Cys-133 are joined by a disulfide. The active-site Cysteine sulfenic acid (-SOH) intermediate is the Cys-133.

The protein belongs to the AhpD family. Homotrimer.

It carries out the reaction N(6)-[(R)-dihydrolipoyl]-L-lysyl-[lipoyl-carrier protein] + a hydroperoxide = N(6)-[(R)-lipoyl]-L-lysyl-[lipoyl-carrier protein] + an alcohol + H2O. Functionally, antioxidant protein with alkyl hydroperoxidase activity. Required for the reduction of the AhpC active site cysteine residues and for the regeneration of the AhpC enzyme activity. This Corynebacterium kroppenstedtii (strain DSM 44385 / JCM 11950 / CIP 105744 / CCUG 35717) protein is Alkyl hydroperoxide reductase AhpD.